A 365-amino-acid polypeptide reads, in one-letter code: DNA replication and repair protein RecF (365 aa).

Glycine 30–threonine 37 lines the ATP pocket.

The protein belongs to the RecF family.

It is found in the cytoplasm. The RecF protein is involved in DNA metabolism; it is required for DNA replication and normal SOS inducibility. RecF binds preferentially to single-stranded, linear DNA. It also seems to bind ATP. The sequence is that of DNA replication and repair protein RecF from Leptospira borgpetersenii serovar Hardjo-bovis (strain JB197).